Consider the following 497-residue polypeptide: tRNA (adenine(58)-N(1))-methyltransferase non-catalytic subunit TRM6 (497 aa).

Residues 81 to 103 (LEEPASETKEAGTDNRNIVDDGK) are disordered. The segment at 95–105 (NRNIVDDGKSQ) is substrate. Phosphothreonine is present on Thr-108. Substrate regions lie at residues 146–155 (KYIKKKKKKY) and 176–183 (REPGKINH). A disordered region spans residues 275–354 (MLSSEPKDST…EKQRRQEEQR (80 aa)). Acidic residues predominate over residues 289-307 (SNGELEEKEIAEQADEDNI). Over residues 328–354 (PENKEPKEKRSKRDYIQEKQRRQEEQR) the composition is skewed to basic and acidic residues. Substrate contacts are provided by Arg-349 and Arg-377. Substrate stretches follow at residues 415–423 (RERGGVINL) and 434–441 (QVLPDRSH). The tract at residues 474–497 (TGALDPHKAEEPAAKKQKCMESAS) is disordered. Basic and acidic residues predominate over residues 478-487 (DPHKAEEPAA).

It belongs to the TRM6/GCD10 family. Heterotetramer; composed of two copies of TRMT6 and two copies of TRMT61A.

It is found in the nucleus. In terms of biological role, substrate-binding subunit of tRNA (adenine-N(1)-)-methyltransferase, which catalyzes the formation of N(1)-methyladenine at position 58 (m1A58) in initiator methionyl-tRNA. Together with the TRMT61A catalytic subunit, part of a mRNA N(1)-methyltransferase complex that mediates methylation of adenosine residues at the N(1) position of a small subset of mRNAs: N(1) methylation takes place in tRNA T-loop-like structures of mRNAs and is only present at low stoichiometries. The polypeptide is tRNA (adenine(58)-N(1))-methyltransferase non-catalytic subunit TRM6 (Trmt6) (Mus musculus (Mouse)).